The chain runs to 264 residues: Small ribosomal subunit protein uS2 (264 aa).

It belongs to the universal ribosomal protein uS2 family.

The chain is Small ribosomal subunit protein uS2 (rpsB) from Helicobacter pylori (strain ATCC 700392 / 26695) (Campylobacter pylori).